A 92-amino-acid chain; its full sequence is Small ribosomal subunit protein uS19c (92 aa).

It belongs to the universal ribosomal protein uS19 family.

It is found in the plastid. The protein localises to the chloroplast. In terms of biological role, protein S19 forms a complex with S13 that binds strongly to the 16S ribosomal RNA. This Adiantum capillus-veneris (Maidenhair fern) protein is Small ribosomal subunit protein uS19c.